The chain runs to 625 residues: Probable thymidylate synthase (625 aa).

The disordered stretch occupies residues 224–323 (AVKNIDGQDD…PEPPVPFTSS (100 aa)). Positions 243-257 (EEYDDDDDDDVDDNE) are enriched in acidic residues. Polar residues-rich tracts occupy residues 258–269 (QSNSMIETSANA) and 293–312 (SQAPLGSESVDTQASENVTT). Residues arginine 350 and 477–478 (RR) each bind dUMP. Cysteine 497 (nucleophile) is an active-site residue. DUMP is bound by residues 524–527 (RSAD), asparagine 535, and 565–567 (HIY). Aspartate 527 is a (6R)-5,10-methylene-5,6,7,8-tetrahydrofolate binding site.

In the N-terminal section; belongs to the HFCD (homo-oligomeric flavin containing Cys decarboxylase) superfamily. It in the C-terminal section; belongs to the thymidylate synthase family.

It localises to the cytoplasm. It catalyses the reaction dUMP + (6R)-5,10-methylene-5,6,7,8-tetrahydrofolate = 7,8-dihydrofolate + dTMP. It participates in pyrimidine metabolism; dTTP biosynthesis. Its function is as follows. Required for both nuclear and mitochondrial DNA synthesis. The protein is Probable thymidylate synthase of Schizosaccharomyces pombe (strain 972 / ATCC 24843) (Fission yeast).